A 403-amino-acid polypeptide reads, in one-letter code: 3-hydroxy-3-methylglutaryl-coenzyme A reductase (403 aa).

Residues Glu-99 and Asp-303 each act as charge relay system in the active site. The active-site Proton donor is His-398.

Belongs to the HMG-CoA reductase family.

The catalysed reaction is (R)-mevalonate + 2 NADP(+) + CoA = (3S)-3-hydroxy-3-methylglutaryl-CoA + 2 NADPH + 2 H(+). Its pathway is metabolic intermediate biosynthesis; (R)-mevalonate biosynthesis; (R)-mevalonate from acetyl-CoA: step 3/3. With respect to regulation, is competitively inhibited by (R)-HMG-CoA and lovastatin (formerly called mevinolin). In terms of biological role, catalyzes the NADPH-dependent reductive deacylation of (S)-3-hydroxy-3-methylglutaryl-CoA (HMG-CoA) to (R)-mevalonate. Functions in the mevalonate (MVA) pathway leading to isopentenyl diphosphate (IPP), a key precursor for the biosynthesis of isoprenoid compounds such as archaeal membrane lipids. Is also able to catalyze the reduction of mevaldehyde to mevalonate and the oxidative acylation of mevaldehyde to HMG-CoA. This chain is 3-hydroxy-3-methylglutaryl-coenzyme A reductase (hmgA), found in Haloferax volcanii (strain ATCC 29605 / DSM 3757 / JCM 8879 / NBRC 14742 / NCIMB 2012 / VKM B-1768 / DS2) (Halobacterium volcanii).